Consider the following 148-residue polypeptide: uncharacterized protein (148 aa).

Helical transmembrane passes span 20 to 42 (YYSK…IANY), 52 to 74 (YFLM…VRCY), and 118 to 135 (IIRY…CTYI).

It is found in the cell membrane. This is an uncharacterized protein from Rickettsia prowazekii (strain Madrid E).